The primary structure comprises 413 residues: Phosphopentomutase (413 aa).

Mn(2+) is bound by residues Asp11, Asp306, His311, Asp347, His348, and His359.

It belongs to the phosphopentomutase family. It depends on Mn(2+) as a cofactor.

The protein localises to the cytoplasm. The catalysed reaction is 2-deoxy-alpha-D-ribose 1-phosphate = 2-deoxy-D-ribose 5-phosphate. The enzyme catalyses alpha-D-ribose 1-phosphate = D-ribose 5-phosphate. The protein operates within carbohydrate degradation; 2-deoxy-D-ribose 1-phosphate degradation; D-glyceraldehyde 3-phosphate and acetaldehyde from 2-deoxy-alpha-D-ribose 1-phosphate: step 1/2. Its function is as follows. Isomerase that catalyzes the conversion of deoxy-ribose 1-phosphate (dRib-1-P) and ribose 1-phosphate (Rib-1-P) to deoxy-ribose 5-phosphate (dRib-5-P) and ribose 5-phosphate (Rib-5-P), respectively. The sequence is that of Phosphopentomutase from Helicobacter pylori (strain ATCC 700392 / 26695) (Campylobacter pylori).